The primary structure comprises 383 residues: Adaptive-response sensory kinase SasA (383 aa).

One can recognise a Histidine kinase domain in the interval 152–365 (MVAHELRTPL…CFTFNVPIWQ (214 aa)). At H155 the chain carries Phosphohistidine; by autocatalysis.

As to quaternary structure, homooligomerizes. Interacts with KaiC. Participates in the KaiABC clock complex, whose core is composed of a KaiC homohexamer, 6 KaiB and up to 6 KaiA dimers. SasA and KaiB(fs) compete to bind to KaiC.

It catalyses the reaction ATP + protein L-histidine = ADP + protein N-phospho-L-histidine.. Its function is as follows. Member of the two-component regulatory system SasA/RpaA involved in genome-wide circadian gene expression. One of several clock output pathways. Participates in the Kai clock protein complex, the main circadian regulator in cyanobacteria, via its interaction with KaiC. KaiC enhances the autophosphorylation activity of SasA, which then transfers its phosphate group to RpaA to activate it. In addition to its output function, recruits fold-shifted KaiB (KaiB(fs)) to KaiC to cooperatively form the KaiB(6):KaiC(6) complex (independent of SasA kinase activity). Required for robustness of the circadian rhythm of gene expression and is involved in clock output, also required for adaptation to light/dark cycles. This is Adaptive-response sensory kinase SasA from Synechococcus sp. (strain CC9311).